We begin with the raw amino-acid sequence, 262 residues long: Small ribosomal subunit protein eS1 (262 aa).

Belongs to the eukaryotic ribosomal protein eS1 family. Component of the small ribosomal subunit. Mature ribosomes consist of a small (40S) and a large (60S) subunit. The 40S subunit contains about 33 different proteins and 1 molecule of RNA (18S). The 60S subunit contains about 49 different proteins and 3 molecules of RNA (25S, 5.8S and 5S).

It localises to the cytoplasm. This is Small ribosomal subunit protein eS1 from Plasmodium knowlesi (strain H).